Here is a 63-residue protein sequence, read N- to C-terminus: Large ribosomal subunit protein uL30 (63 aa).

The protein belongs to the universal ribosomal protein uL30 family. As to quaternary structure, part of the 50S ribosomal subunit.

The protein is Large ribosomal subunit protein uL30 of Xanthomonas campestris pv. campestris (strain 8004).